The chain runs to 613 residues: Transcription factor cbf11 (613 aa).

The interval 32–58 (NNGLHNQEDGAGGRNENSERVGSGSPG) is disordered.

It belongs to the Su(H) family.

It is found in the cytoplasm. It localises to the nucleus. In terms of biological role, transcription factor that behaves as a negative regulator of adhesion. Recognizes specifically the canonical CSL response element GTGA/GGAA. May also play a cbf12-antagonistic role in the regulation of a number of other important processes such as extracellular material production, colony morphogenesis, ploidy maintenance, or meiosis. This Schizosaccharomyces pombe (strain 972 / ATCC 24843) (Fission yeast) protein is Transcription factor cbf11 (cbf11).